Consider the following 83-residue polypeptide: Translation initiation factor IF-1 (83 aa).

Residues M1–L72 enclose the S1-like domain.

Belongs to the IF-1 family. Component of the 30S ribosomal translation pre-initiation complex which assembles on the 30S ribosome in the order IF-2 and IF-3, IF-1 and N-formylmethionyl-tRNA(fMet); mRNA recruitment can occur at any time during PIC assembly.

The protein localises to the cytoplasm. Its function is as follows. One of the essential components for the initiation of protein synthesis. Stabilizes the binding of IF-2 and IF-3 on the 30S subunit to which N-formylmethionyl-tRNA(fMet) subsequently binds. Helps modulate mRNA selection, yielding the 30S pre-initiation complex (PIC). Upon addition of the 50S ribosomal subunit IF-1, IF-2 and IF-3 are released leaving the mature 70S translation initiation complex. The protein is Translation initiation factor IF-1 of Verminephrobacter eiseniae (strain EF01-2).